The sequence spans 361 residues: Peptide chain release factor 1 (361 aa).

The residue at position 237 (Gln-237) is an N5-methylglutamine. The segment at 286–306 (AKQDQEQAAKRKSLVGSGDRS) is disordered.

It belongs to the prokaryotic/mitochondrial release factor family. In terms of processing, methylated by PrmC. Methylation increases the termination efficiency of RF1.

The protein resides in the cytoplasm. Functionally, peptide chain release factor 1 directs the termination of translation in response to the peptide chain termination codons UAG and UAA. This is Peptide chain release factor 1 from Coxiella burnetii (strain CbuK_Q154) (Coxiella burnetii (strain Q154)).